The chain runs to 221 residues: Urease accessory protein UreG (221 aa).

19–26 (GPVGSGKT) is a GTP binding site.

The protein belongs to the SIMIBI class G3E GTPase family. UreG subfamily. Homodimer. UreD, UreF and UreG form a complex that acts as a GTP-hydrolysis-dependent molecular chaperone, activating the urease apoprotein by helping to assemble the nickel containing metallocenter of UreC. The UreE protein probably delivers the nickel.

The protein resides in the cytoplasm. In terms of biological role, facilitates the functional incorporation of the urease nickel metallocenter. This process requires GTP hydrolysis, probably effectuated by UreG. Expression of the urease operon increases the likelihood of bacterial survival by contributing to acid resistance in vitro and in vivo in BALB/c mice. Y.enterocolitica enters the body via an oral path and must survive the acidic stomach before being able to colonize the intestinal mucosa. The chain is Urease accessory protein UreG from Yersinia enterocolitica.